The primary structure comprises 262 residues: Ribosomal RNA small subunit methyltransferase A (262 aa).

Residues His16, Leu18, Gly43, Glu64, Asp89, and Asn109 each contribute to the S-adenosyl-L-methionine site.

This sequence belongs to the class I-like SAM-binding methyltransferase superfamily. rRNA adenine N(6)-methyltransferase family. RsmA subfamily.

It localises to the cytoplasm. The catalysed reaction is adenosine(1518)/adenosine(1519) in 16S rRNA + 4 S-adenosyl-L-methionine = N(6)-dimethyladenosine(1518)/N(6)-dimethyladenosine(1519) in 16S rRNA + 4 S-adenosyl-L-homocysteine + 4 H(+). Specifically dimethylates two adjacent adenosines (A1518 and A1519) in the loop of a conserved hairpin near the 3'-end of 16S rRNA in the 30S particle. May play a critical role in biogenesis of 30S subunits. This Xanthomonas oryzae pv. oryzae (strain MAFF 311018) protein is Ribosomal RNA small subunit methyltransferase A.